Here is a 476-residue protein sequence, read N- to C-terminus: Glutamyl-tRNA(Gln) amidotransferase subunit A (476 aa).

Residues Lys69 and Ser144 each act as charge relay system in the active site. Ser168 acts as the Acyl-ester intermediate in catalysis.

Belongs to the amidase family. GatA subfamily. Heterotrimer of A, B and C subunits.

The enzyme catalyses L-glutamyl-tRNA(Gln) + L-glutamine + ATP + H2O = L-glutaminyl-tRNA(Gln) + L-glutamate + ADP + phosphate + H(+). In terms of biological role, allows the formation of correctly charged Gln-tRNA(Gln) through the transamidation of misacylated Glu-tRNA(Gln) in organisms which lack glutaminyl-tRNA synthetase. The reaction takes place in the presence of glutamine and ATP through an activated gamma-phospho-Glu-tRNA(Gln). This is Glutamyl-tRNA(Gln) amidotransferase subunit A from Sulfolobus acidocaldarius (strain ATCC 33909 / DSM 639 / JCM 8929 / NBRC 15157 / NCIMB 11770).